A 359-amino-acid polypeptide reads, in one-letter code: tRNA N6-adenosine threonylcarbamoyltransferase (359 aa).

Positions 115 and 119 each coordinate Fe cation. Substrate is bound by residues 137–141, Asp170, Gly183, and Asn283; that span reads LVSGG. A Fe cation-binding site is contributed by Asp311. Residues 328 to 359 form a disordered region; sequence APDSLDIAPRSRWPLDEKSAPVFGTGRRGAKA.

The protein belongs to the KAE1 / TsaD family. The cofactor is Fe(2+).

Its subcellular location is the cytoplasm. It carries out the reaction L-threonylcarbamoyladenylate + adenosine(37) in tRNA = N(6)-L-threonylcarbamoyladenosine(37) in tRNA + AMP + H(+). Functionally, required for the formation of a threonylcarbamoyl group on adenosine at position 37 (t(6)A37) in tRNAs that read codons beginning with adenine. Is involved in the transfer of the threonylcarbamoyl moiety of threonylcarbamoyl-AMP (TC-AMP) to the N6 group of A37, together with TsaE and TsaB. TsaD likely plays a direct catalytic role in this reaction. The polypeptide is tRNA N6-adenosine threonylcarbamoyltransferase (Brucella abortus (strain S19)).